Reading from the N-terminus, the 222-residue chain is Eukaryotic translation initiation factor 3 subunit K (222 aa).

A PCI domain is found at 46–208 (YDLEANLAVL…KIKTKNITEK (163 aa)).

It belongs to the eIF-3 subunit K family. As to quaternary structure, component of the eukaryotic translation initiation factor 3 (eIF-3) complex. The eIF-3 complex interacts with pix.

It localises to the cytoplasm. In terms of biological role, component of the eukaryotic translation initiation factor 3 (eIF-3) complex, which is involved in protein synthesis of a specialized repertoire of mRNAs and, together with other initiation factors, stimulates binding of mRNA and methionyl-tRNAi to the 40S ribosome. The eIF-3 complex specifically targets and initiates translation of a subset of mRNAs involved in cell proliferation. The polypeptide is Eukaryotic translation initiation factor 3 subunit K (Drosophila sechellia (Fruit fly)).